Here is a 609-residue protein sequence, read N- to C-terminus: MWRLPGVRAALRGVRTAVERRSRTEAASETSVGAMERAVVRCVPSEPKLSLSFALADGSHKNMQRDQSEPLGRALSRIATNALKGHAKVAAAKKSRKNRPNAGSGVACAGPGPEPAAACEPVVKLYYREEAVAEDVLNVDAWQDGAVLQIGDVKYKVERNPPAFTELQLPRYIMAGFPVCPKLGVEFGDPTGSLFRWYKETKPRAAEPEGGGPSSSSPSSPSPGWTETGVDERVYTPSNADIGLRLKLHCTPGNGQRFGPSRELESVCPVEAGPGTCTFDHRHLYTKKVTDDALIRTVSYNILADTYAQTEFSRTVLYPYCAPYALELDYRQNLIQKELTGYNADLICLQEVDRCVFTDSLMPALEAFGLEGVFRIKQHEGLATFYRKSKFSLLSQHDIAFHEALQSDPLHKELLEKLALYPSAQERVLQRSSVVQVSVLQSTKDSSKKICVANTHLYWHPKGGYIRLIQMAVALAHIRHVSCDLYPGIPVIFCGDFNSTPSTGMYHFVINGSIAEDHEDWTSNGEEERCNMSLSHFFKLKSACGEPAYTNYVGGFHGCLDYIFIDLHALEVEQVIPLPSHEEVTTHQALPSVSHPSDHIALVCDLKWK.

The transit peptide at 1-16 directs the protein to the mitochondrion; it reads MWRLPGVRAALRGVRT. Residues 203–231 form a disordered region; sequence PRAAEPEGGGPSSSSPSSPSPGWTETGVD. Low complexity predominate over residues 214–224; sequence SSSSPSSPSPG. S217 carries the post-translational modification Phosphoserine. Residues E351, D496, and N498 each contribute to the Mg(2+) site. The active-site Proton donor/acceptor is the D496.

Belongs to the CCR4/nocturin family. Mg(2+) serves as cofactor. In terms of tissue distribution, liver.

It localises to the mitochondrion matrix. It catalyses the reaction Exonucleolytic cleavage of poly(A) to 5'-AMP.. In terms of biological role, enzyme that cleaves 2',5'-phosphodiester bond linking adenosines of the 5'-triphosphorylated oligoadenylates, triphosphorylated oligoadenylates referred as 2-5A modulates the 2-5A system. Degrades triphosphorylated 2-5A to produce AMP and ATP. Also cleaves 3',5'-phosphodiester bond of oligoadenylates. Plays a role as a negative regulator of the 2-5A system that is one of the major pathways for antiviral and antitumor functions induced by interferons (IFNs). Suppression of this enzyme increases cellular 2-5A levels and decreases viral replication in cultured small-airway epithelial cells. The sequence is that of 2',5'-phosphodiesterase 12 (PDE12) from Bos taurus (Bovine).